The chain runs to 1210 residues: MRPSGTAGAALLALLAALCPASRALEEKKVCQGTSNKLTQLGTFEDHFLSLQRMFNNCEVVLGNLEITYVQRNYDLSFLKTIQEVAGYVLIALNTVERIPLENLQIIRGNMYYENSYALAVLSNYDANKTGLKELPMRNLQEILHGAVRFSNNPALCNVESIQWRDIVSSEFLSNMSMDFQNHLGSCQKCDPSCPNGSCWGAGEENCQKLTKIICAQQCSGRCRGKSPSDCCHNQCAAGCTGPRESDCLVCRKFRDEATCKDTCPPLMLYNPTTYQMDVNPEGKYSFGATCVKKCPRNYVVTDHGSCVRACGADSYEMEEDGVRKCKKCEGPCRKVCNGIGIGEFKDTLSINATNIKHFKNCTSISGDLHILPVAFRGDSFTHTPPLDPQELDILKTVKEITGFLLIQAWPENRTDLHAFENLEIIRGRTKQHGQFSLAVVSLNITSLGLRSLKEISDGDVIISGNKNLCYANTINWKKLFGTSSQKTKIISNRGENSCKATGQVCHALCSPEGCWGPEPRDCVSCQNVSRGRECVDKCNVLEGEPREFVENSECIQCHPECLPQVMNITCTGRGPDNCIQCAHYIDGPHCVKTCPAGVMGENNTLVWKYADAGHVCHLCHPNCTYGCTGPGLEGCARNGPKIPSIATGMVGALLLLLVVALGIGLFMRRRHIVRKRTLRRLLQERELVEPLTPSGEAPNQALLRILKETEFKKIKVLGSGAFGTVYKGLWIPEGEKVKIPVAIKELREATSPKANKEILDEAYVMASVDNPHVCRLLGICLTSTVQLITQLMPFGCLLDYVREHKDNIGSQYLLNWCVQIAKGMNYLEDRRLVHRDLAARNVLVKTPQHVKITDFGLAKLLGAEEKEYHAEGGKVPIKWMALESILHRIYTHQSDVWSYGVTVWELMTFGSKPYDGIPASEISSILEKGERLPQPPICTIDVYMIMVKCWMIDADSRPKFRELIIEFSKMARDPQRYLVIQGDERMHLPSPTDSNFYRALMDEEDMDDVVDADEYLIPQQGFFSSPSTSRTPLLSSLSATSNNSTVACIDRNGLQSCPIKEDSFLQRYSSDPTGALTEDSIDDTFLPVPEYINQSVPKRPAGSVQNPVYHNQPLNPAPSRDPHYQDPHSTAVGNPEYLNTVQPTCVNSTFDSPAHWAQKGSHQISLDNPDYQQDFFPKEAKPNGIFKGSTAENAEYLRVAPQSSEFIGA.

The N-terminal stretch at 1–24 (MRPSGTAGAALLALLAALCPASRA) is a signal peptide. Over 25 to 645 (LEEKKVCQGT…CARNGPKIPS (621 aa)) the chain is Extracellular. A disulfide bridge connects residues Cys31 and Cys58. The Approximate repeat unit spans residues 75-300 (DLSFLKTIQE…CVKKCPRNYV (226 aa)). N-linked (GlcNAc...) asparagine glycans are attached at residues Asn128, Asn175, and Asn196. 13 disulfide bridges follow: Cys157–Cys187, Cys190–Cys199, Cys194–Cys207, Cys215–Cys223, Cys219–Cys231, Cys232–Cys240, Cys236–Cys248, Cys251–Cys260, Cys264–Cys291, Cys295–Cys307, Cys311–Cys326, Cys329–Cys333, and Cys337–Cys362. Ser229 carries the post-translational modification Phosphoserine. N-linked (GlcNAc...) asparagine glycans are attached at residues Asn352, Asn361, Asn413, and Asn444. An Approximate repeat occupies 390–600 (QELDILKTVK…CVKTCPAGVM (211 aa)). Disulfide bonds link Cys470-Cys499, Cys506-Cys515, Cys510-Cys523, Cys526-Cys535, Cys539-Cys555, Cys558-Cys571, Cys562-Cys579, Cys582-Cys591, Cys595-Cys617, Cys620-Cys628, and Cys624-Cys636. Residue Asn528 is glycosylated (N-linked (GlcNAc...) asparagine). Asn568 carries an N-linked (GlcNAc...) asparagine glycan. N-linked (GlcNAc...) asparagine glycosylation occurs at Asn603. Residues 646 to 668 (IATGMVGALLLLLVVALGIGLFM) traverse the membrane as a helical segment. At 669-1210 (RRRHIVRKRT…APQSSEFIGA (542 aa)) the chain is on the cytoplasmic side. A Phosphothreonine; by PKC and PKD/PRKD1 modification is found at Thr678. Positions 688-704 (LVEPLTPSGEAPNQALL) are important for dimerization, phosphorylation and activation. Residue Thr693 is modified to Phosphothreonine; by PKD/PRKD1. Position 695 is a phosphoserine (Ser695). One can recognise a Protein kinase domain in the interval 712–979 (FKKIKVLGSG…KMARDPQRYL (268 aa)). Lys716 is covalently cross-linked (Glycyl lysine isopeptide (Lys-Gly) (interchain with G-Cter in ubiquitin)). Position 718 to 726 (718 to 726 (LGSGAFGTV)) interacts with ATP. Lys737 participates in a covalent cross-link: Glycyl lysine isopeptide (Lys-Gly) (interchain with G-Cter in ubiquitin). Lys745 lines the ATP pocket. Lys745 is modified (N6-(2-hydroxyisobutyryl)lysine). Residues Lys754 and Lys757 each participate in a glycyl lysine isopeptide (Lys-Gly) (interchain with G-Cter in ubiquitin) cross-link. 790–791 (TQ) is an ATP binding site. The active-site Proton acceptor is Asp837. Asp855 is a binding site for ATP. Residue Lys867 forms a Glycyl lysine isopeptide (Lys-Gly) (interchain with G-Cter in ubiquitin) linkage. The residue at position 869 (Tyr869) is a Phosphotyrosine. Glycyl lysine isopeptide (Lys-Gly) (interchain with G-Cter in ubiquitin) cross-links involve residues Lys929, Lys960, and Lys970. Ser991 and Ser995 each carry phosphoserine. Tyr998 and Tyr1016 each carry phosphotyrosine; by autocatalysis. Ser1026 and Ser1039 each carry phosphoserine. The residue at position 1041 (Thr1041) is a Phosphothreonine. Position 1042 is a phosphoserine (Ser1042). Cys1049 is lipidated: S-palmitoyl cysteine. Phosphoserine is present on Ser1064. Residue Tyr1069 is modified to Phosphotyrosine. Residues Ser1070, Ser1071, and Ser1081 each carry the phosphoserine modification. Tyr1092 and Tyr1110 each carry phosphotyrosine; by autocatalysis. The interval 1097–1137 (VPKRPAGSVQNPVYHNQPLNPAPSRDPHYQDPHSTAVGNPE) is disordered. Composition is skewed to polar residues over residues 1104-1115 (SVQNPVYHNQPL) and 1128-1137 (PHSTAVGNPE). Cys1146 carries S-palmitoyl cysteine lipidation. Ser1166 carries the post-translational modification Phosphoserine. Phosphotyrosine; by autocatalysis is present on residues Tyr1172 and Tyr1197. Arg1199 carries the omega-N-methylarginine modification.

The protein belongs to the protein kinase superfamily. Tyr protein kinase family. EGF receptor subfamily. As to quaternary structure, binding of the ligand triggers homo- and/or heterodimerization of the receptor triggering its autophosphorylation. Heterodimer with ERBB2. Forms a complex with CCDC88A/GIV (via SH2-like regions) and GNAI3 which leads to enhanced EGFR signaling and triggering of cell migration; binding to CCDC88A requires autophosphorylation of the EGFR C-terminal region, and ligand stimulation is required for recruitment of GNAI3 to the complex. Interacts with ERRFI1; inhibits dimerization of the kinase domain and autophosphorylation. Part of a complex with ERBB2 and either PIK3C2A or PIK3C2B. Interacts with GRB2; an adapter protein coupling the receptor to downstream signaling pathways. Interacts with GAB2; involved in signaling downstream of EGFR. Interacts with STAT3; mediates EGFR downstream signaling in cell proliferation. Interacts with RIPK1; involved in NF-kappa-B activation. Interacts (autophosphorylated) with CBL, CBLB and CBLC; involved in EGFR ubiquitination and regulation; interaction with CBL is reduced in the presence of tensin TNS4. Interacts with SOCS5; regulates EGFR degradation through ELOC- and ELOB-mediated ubiquitination and proteasomal degradation. Interacts with PRMT5; methylates EGFR and enhances interaction with PTPN6. Interacts (phosphorylated) with PTPN6; inhibits EGFR-dependent activation of MAPK/ERK. Interacts with COPG1; essential for regulation of EGF-dependent nuclear transport of EGFR by retrograde trafficking from the Golgi to the ER. Interacts with TNK2; this interaction is dependent on EGF stimulation and kinase activity of EGFR. Interacts with PCNA; positively regulates PCNA. Interacts with PELP1. Interacts with MUC1. Interacts with AP2M1. Interacts with FER. May interact with EPS8; mediates EPS8 phosphorylation. Interacts (via SH2 domains) with GRB2, NCK1 and NCK2. Interacts with ATXN2. Interacts with GAREM1. Interacts (ubiquitinated) with ANKRD13A/B/D; the interaction is direct and may regulate EGFR internalization after EGF stimulation. Interacts with GPER1; the interaction occurs in an estrogen-dependent manner. Interacts (via C-terminal cytoplasmic kinase domain) with ZPR1 (via zinc fingers). Interacts with RNF115 and RNF126. Interacts with GPRC5A (via its transmembrane domain). Interacts with FAM83B; positively regulates EGFR inducing its autophosphorylation in absence of stimulation by EGF. Interacts with LAPTM4B; positively correlates with EGFR activation. Interacts with STX19. Interacts with CD44. Interacts with PGRMC1; the interaction requires PGRMC1 homodimerization. Interacts with PIKFYVE. Interacts with NEU3. Interacts with TRAF4. Interacts with the ant venom OMEGA-myrmeciitoxin(02)-Mg1a. Interacts with CD82; this interaction facilitates ligand-induced endocytosis of the receptor and its subsequent desensitization. Phosphorylated on Tyr residues in response to EGF. Phosphorylation at Ser-695 is partial and occurs only if Thr-693 is phosphorylated. Phosphorylation at Thr-678 and Thr-693 by PRKD1 inhibits EGF-induced MAPK8/JNK1 activation. Dephosphorylation by PTPRJ prevents endocytosis and stabilizes the receptor at the plasma membrane. Autophosphorylation at Tyr-1197 is stimulated by methylation at Arg-1199 and enhances interaction with PTPN6. Autophosphorylation at Tyr-1092 and/or Tyr-1110 recruits STAT3. Dephosphorylated by PTPN1 and PTPN2. In terms of processing, monoubiquitinated and polyubiquitinated upon EGF stimulation; which does not affect tyrosine kinase activity or signaling capacity but may play a role in lysosomal targeting. Polyubiquitin linkage is mainly through 'Lys-63', but linkage through 'Lys-48', 'Lys-11' and 'Lys-29' also occurs. Deubiquitination by OTUD7B prevents degradation. Ubiquitinated by RNF115 and RNF126. Ubiquitinated by ZNRF1 or CBL at different lysines in response to EGF stimulation; leading to recruitment of the ESCRT machinery and subsequent degradation in the lysosomes. Deubiquitinated by UCHL1 leading to the inhibition of its degradation. Post-translationally, palmitoylated on Cys residues by ZDHHC20. Palmitoylation inhibits internalization after ligand binding, and increases the persistence of tyrosine-phosphorylated EGFR at the cell membrane. Palmitoylation increases the amplitude and duration of EGFR signaling. Methylated. Methylation at Arg-1199 by PRMT5 stimulates phosphorylation at Tyr-1197. Hypothalamus.

Its subcellular location is the cell membrane. It is found in the endoplasmic reticulum membrane. The protein localises to the golgi apparatus membrane. It localises to the nucleus membrane. The protein resides in the endosome. Its subcellular location is the endosome membrane. It is found in the nucleus. It carries out the reaction L-tyrosyl-[protein] + ATP = O-phospho-L-tyrosyl-[protein] + ADP + H(+). With respect to regulation, endocytosis and inhibition of the activated EGFR by phosphatases like PTPRJ and PTPRK constitute immediate regulatory mechanisms. Upon EGF-binding phosphorylates EPS15 that regulates EGFR endocytosis and activity. Moreover, inducible feedback inhibitors including LRIG1, SOCS4, SOCS5 and ERRFI1 constitute alternative regulatory mechanisms for the EGFR signaling. In terms of biological role, receptor tyrosine kinase binding ligands of the EGF family and activating several signaling cascades to convert extracellular cues into appropriate cellular responses. Known ligands include EGF, TGFA/TGF-alpha, AREG, epigen/EPGN, BTC/betacellulin, epiregulin/EREG and HBEGF/heparin-binding EGF. Ligand binding triggers receptor homo- and/or heterodimerization and autophosphorylation on key cytoplasmic residues. The phosphorylated receptor recruits adapter proteins like GRB2 which in turn activates complex downstream signaling cascades. Activates at least 4 major downstream signaling cascades including the RAS-RAF-MEK-ERK, PI3 kinase-AKT, PLCgamma-PKC and STATs modules. May also activate the NF-kappa-B signaling cascade. Also directly phosphorylates other proteins like RGS16, activating its GTPase activity and probably coupling the EGF receptor signaling to the G protein-coupled receptor signaling. Also phosphorylates MUC1 and increases its interaction with SRC and CTNNB1/beta-catenin. Positively regulates cell migration via interaction with CCDC88A/GIV which retains EGFR at the cell membrane following ligand stimulation, promoting EGFR signaling which triggers cell migration. Plays a role in enhancing learning and memory performance. Plays a role in mammalian pain signaling (long-lasting hypersensitivity). The chain is Epidermal growth factor receptor (EGFR) from Macaca mulatta (Rhesus macaque).